The sequence spans 427 residues: Serine hydroxymethyltransferase (427 aa).

Residues L122 and 126–128 contribute to the (6S)-5,6,7,8-tetrahydrofolate site; that span reads GHL. N6-(pyridoxal phosphate)lysine is present on K231. Position 355-357 (355-357) interacts with (6S)-5,6,7,8-tetrahydrofolate; it reads SPF.

The protein belongs to the SHMT family. As to quaternary structure, homodimer. Pyridoxal 5'-phosphate is required as a cofactor.

Its subcellular location is the cytoplasm. The catalysed reaction is (6R)-5,10-methylene-5,6,7,8-tetrahydrofolate + glycine + H2O = (6S)-5,6,7,8-tetrahydrofolate + L-serine. It functions in the pathway one-carbon metabolism; tetrahydrofolate interconversion. The protein operates within amino-acid biosynthesis; glycine biosynthesis; glycine from L-serine: step 1/1. Functionally, catalyzes the reversible interconversion of serine and glycine with tetrahydrofolate (THF) serving as the one-carbon carrier. This reaction serves as the major source of one-carbon groups required for the biosynthesis of purines, thymidylate, methionine, and other important biomolecules. Also exhibits THF-independent aldolase activity toward beta-hydroxyamino acids, producing glycine and aldehydes, via a retro-aldol mechanism. The sequence is that of Serine hydroxymethyltransferase from Synechococcus sp. (strain ATCC 27144 / PCC 6301 / SAUG 1402/1) (Anacystis nidulans).